Here is a 276-residue protein sequence, read N- to C-terminus: NH(3)-dependent NAD(+) synthetase (276 aa).

Residue 43-50 coordinates ATP; that stretch reads GISGGVDS. Position 49 (D49) interacts with Mg(2+). R146 contributes to the deamido-NAD(+) binding site. Residue T166 participates in ATP binding. Mg(2+) is bound at residue E171. Deamido-NAD(+)-binding residues include K179 and D186. Positions 195 and 217 each coordinate ATP. Residue 266–267 participates in deamido-NAD(+) binding; that stretch reads HK.

The protein belongs to the NAD synthetase family. Homodimer.

It catalyses the reaction deamido-NAD(+) + NH4(+) + ATP = AMP + diphosphate + NAD(+) + H(+). The protein operates within cofactor biosynthesis; NAD(+) biosynthesis; NAD(+) from deamido-NAD(+) (ammonia route): step 1/1. Functionally, catalyzes the ATP-dependent amidation of deamido-NAD to form NAD. Uses ammonia as a nitrogen source. This Vibrio cholerae serotype O1 (strain ATCC 39541 / Classical Ogawa 395 / O395) protein is NH(3)-dependent NAD(+) synthetase.